The primary structure comprises 553 residues: Probable bifunctional riboflavin biosynthesis protein RIBA 2, chloroplastic (553 aa).

The N-terminal 56 residues, M1–A56, are a transit peptide targeting the chloroplast. Positions D62 to K336 are DHBP synthase. Positions Y70–P90 are disordered. The span at G72 to R85 shows a compositional bias: polar residues. D-ribulose 5-phosphate is bound by residues R160–E161, D165, R275–T279, and E299. E161 lines the Mg(2+) pocket. H278 serves as a coordination point for Mg(2+). A GTP cyclohydrolase II region spans residues R337 to H553. R387 to E391 provides a ligand contact to GTP. Zn(2+)-binding residues include C392, C403, and C405. GTP is bound by residues Q408, E431–R433, and T453. Residue D465 is the Proton acceptor; for GTP cyclohydrolase activity of the active site. The active-site Nucleophile; for GTP cyclohydrolase activity is R467. 2 residues coordinate GTP: T488 and K493.

It in the N-terminal section; belongs to the DHBP synthase family. This sequence in the C-terminal section; belongs to the GTP cyclohydrolase II family. It depends on Mg(2+) as a cofactor. Mn(2+) is required as a cofactor. The cofactor is Zn(2+).

It is found in the plastid. The protein localises to the chloroplast. The enzyme catalyses D-ribulose 5-phosphate = (2S)-2-hydroxy-3-oxobutyl phosphate + formate + H(+). It carries out the reaction GTP + 4 H2O = 2,5-diamino-6-hydroxy-4-(5-phosphoribosylamino)-pyrimidine + formate + 2 phosphate + 3 H(+). It participates in cofactor biosynthesis; riboflavin biosynthesis; 2-hydroxy-3-oxobutyl phosphate from D-ribulose 5-phosphate: step 1/1. It functions in the pathway cofactor biosynthesis; riboflavin biosynthesis; 5-amino-6-(D-ribitylamino)uracil from GTP: step 1/4. Involved in riboflavin biosynthesis. Catalyzes both the conversion of D-ribulose 5-phosphate to formate and 3,4-dihydroxy-2-butanone 4-phosphate and the conversion of GTP to 2,5-diamino-6-ribosylamino-4(3H)-pyrimidinone 5'-phosphate (DARP), formate and pyrophosphate. The chain is Probable bifunctional riboflavin biosynthesis protein RIBA 2, chloroplastic (RIBA2) from Oryza sativa subsp. japonica (Rice).